The following is a 313-amino-acid chain: Aspartate carbamoyltransferase catalytic subunit (313 aa).

Positions 54 and 55 each coordinate carbamoyl phosphate. K82 is an L-aspartate binding site. Residues R104, H132, and Q135 each coordinate carbamoyl phosphate. The L-aspartate site is built by R165 and R219. G260 and P261 together coordinate carbamoyl phosphate.

The protein belongs to the aspartate/ornithine carbamoyltransferase superfamily. ATCase family. In terms of assembly, heterododecamer (2C3:3R2) of six catalytic PyrB chains organized as two trimers (C3), and six regulatory PyrI chains organized as three dimers (R2).

It catalyses the reaction carbamoyl phosphate + L-aspartate = N-carbamoyl-L-aspartate + phosphate + H(+). It functions in the pathway pyrimidine metabolism; UMP biosynthesis via de novo pathway; (S)-dihydroorotate from bicarbonate: step 2/3. In terms of biological role, catalyzes the condensation of carbamoyl phosphate and aspartate to form carbamoyl aspartate and inorganic phosphate, the committed step in the de novo pyrimidine nucleotide biosynthesis pathway. The sequence is that of Aspartate carbamoyltransferase catalytic subunit from Thermobifida fusca (strain YX).